A 436-amino-acid chain; its full sequence is Probable protein phosphatase 2C 15 (436 aa).

Residues 30-302 (KAAKMEKPIV…DDTTCIVVDI (273 aa)) form the PPM-type phosphatase domain. 4 residues coordinate Mn(2+): D78, G79, D254, and D293.

Belongs to the PP2C family. Mg(2+) serves as cofactor. Mn(2+) is required as a cofactor.

The enzyme catalyses O-phospho-L-seryl-[protein] + H2O = L-seryl-[protein] + phosphate. It carries out the reaction O-phospho-L-threonyl-[protein] + H2O = L-threonyl-[protein] + phosphate. The chain is Probable protein phosphatase 2C 15 from Arabidopsis thaliana (Mouse-ear cress).